Consider the following 333-residue polypeptide: Gap junction alpha-4 protein (333 aa).

At 1 to 20 the chain is on the cytoplasmic side; sequence MGDWGFLEKLLDQVQEHSTV. A helical membrane pass occupies residues 21–40; sequence VGKIWLTVLFIFRILILGLA. Residues 41–76 lie on the Extracellular side of the membrane; that stretch reads GESVWGDEQSDFECNTAQPGCTNVCYDQAFPISHIR. The helical transmembrane segment at 77-99 threads the bilayer; that stretch reads YWVLQFLFVSTPTLVYLGHVIYL. The Cytoplasmic segment spans residues 100 to 148; the sequence is SRREERLRQKEGELRALPAKDPQVERALAAVERQMAKISVAEDGRLRIR. The chain crosses the membrane as a helical span at residues 149 to 165; that stretch reads GALMGTYVASVLCKSVL. Over 166 to 207 the chain is Extracellular; it reads EAGFLYGQWRLYGWTMEPVFVCQRAPCPYLVDCFVSRPTEKT. Residues 208–230 traverse the membrane as a helical segment; sequence IFIIFMLVVGLISLVLNLLELVH. Topologically, residues 231–333 are cytoplasmic; that stretch reads LLCRCLSRGM…SSSASKKQYV (103 aa). The interval 292-333 is disordered; that stretch reads ANLTTEERLASSRPPLFLDPPPQNGQKPPSRPSSSASKKQYV. A compositionally biased stretch (low complexity) spans 323–333; it reads PSSSASKKQYV.

Belongs to the connexin family. Alpha-type (group II) subfamily. A connexon is composed of a hexamer of connexins. As to expression, expressed in multiple organs and tissues, including heart, uterus, ovary, and blood vessel endothelium.

It localises to the cell membrane. The protein localises to the cell junction. The protein resides in the gap junction. Its function is as follows. One gap junction consists of a cluster of closely packed pairs of transmembrane channels, the connexons, through which materials of low MW diffuse from one cell to a neighboring cell. This Homo sapiens (Human) protein is Gap junction alpha-4 protein (GJA4).